Here is a 150-residue protein sequence, read N- to C-terminus: Ribosome maturation factor RimP (150 aa).

Belongs to the RimP family.

It localises to the cytoplasm. Its function is as follows. Required for maturation of 30S ribosomal subunits. In Methylococcus capsulatus (strain ATCC 33009 / NCIMB 11132 / Bath), this protein is Ribosome maturation factor RimP.